The following is a 76-amino-acid chain: Sec-independent protein translocase protein TatA (76 aa).

Residues 1–21 (MGSFSIWHWLIVLAVVLLLFG) traverse the membrane as a helical segment. The tract at residues 43 to 76 (MSDEDAKDDARDSGRTIDAKADETVNDVKKTTKS) is disordered. The span at 50–76 (DDARDSGRTIDAKADETVNDVKKTTKS) shows a compositional bias: basic and acidic residues.

It belongs to the TatA/E family. The Tat system comprises two distinct complexes: a TatABC complex, containing multiple copies of TatA, TatB and TatC subunits, and a separate TatA complex, containing only TatA subunits. Substrates initially bind to the TatABC complex, which probably triggers association of the separate TatA complex to form the active translocon.

The protein resides in the cell inner membrane. Part of the twin-arginine translocation (Tat) system that transports large folded proteins containing a characteristic twin-arginine motif in their signal peptide across membranes. TatA could form the protein-conducting channel of the Tat system. The chain is Sec-independent protein translocase protein TatA from Brucella anthropi (strain ATCC 49188 / DSM 6882 / CCUG 24695 / JCM 21032 / LMG 3331 / NBRC 15819 / NCTC 12168 / Alc 37) (Ochrobactrum anthropi).